The primary structure comprises 697 residues: Glycine--tRNA ligase beta subunit (697 aa).

This sequence belongs to the class-II aminoacyl-tRNA synthetase family. As to quaternary structure, tetramer of two alpha and two beta subunits.

The protein localises to the cytoplasm. The enzyme catalyses tRNA(Gly) + glycine + ATP = glycyl-tRNA(Gly) + AMP + diphosphate. This is Glycine--tRNA ligase beta subunit from Cereibacter sphaeroides (strain ATCC 17023 / DSM 158 / JCM 6121 / CCUG 31486 / LMG 2827 / NBRC 12203 / NCIMB 8253 / ATH 2.4.1.) (Rhodobacter sphaeroides).